Consider the following 84-residue polypeptide: NAD(P)H-quinone oxidoreductase subunit O (84 aa).

Belongs to the complex I NdhO subunit family. As to quaternary structure, NDH-1 can be composed of about 15 different subunits; different subcomplexes with different compositions have been identified which probably have different functions.

It is found in the cellular thylakoid membrane. The catalysed reaction is a plastoquinone + NADH + (n+1) H(+)(in) = a plastoquinol + NAD(+) + n H(+)(out). It carries out the reaction a plastoquinone + NADPH + (n+1) H(+)(in) = a plastoquinol + NADP(+) + n H(+)(out). NDH-1 shuttles electrons from an unknown electron donor, via FMN and iron-sulfur (Fe-S) centers, to quinones in the respiratory and/or the photosynthetic chain. The immediate electron acceptor for the enzyme in this species is believed to be plastoquinone. Couples the redox reaction to proton translocation, and thus conserves the redox energy in a proton gradient. Cyanobacterial NDH-1 also plays a role in inorganic carbon-concentration. The protein is NAD(P)H-quinone oxidoreductase subunit O of Parasynechococcus marenigrum (strain WH8102).